The following is a 361-amino-acid chain: 1D-myo-inositol 2-acetamido-2-deoxy-alpha-D-glucopyranoside deacetylase (361 aa).

Over residues M1 to D12 the composition is skewed to pro residues. The disordered stretch occupies residues M1–D27. Residues E16 to G25 show a composition bias toward low complexity. Zn(2+) contacts are provided by H66, D69, and H207.

This sequence belongs to the MshB deacetylase family. Zn(2+) is required as a cofactor.

The enzyme catalyses 1D-myo-inositol 2-acetamido-2-deoxy-alpha-D-glucopyranoside + H2O = 1D-myo-inositol 2-amino-2-deoxy-alpha-D-glucopyranoside + acetate. Catalyzes the deacetylation of 1D-myo-inositol 2-acetamido-2-deoxy-alpha-D-glucopyranoside (GlcNAc-Ins) in the mycothiol biosynthesis pathway. The protein is 1D-myo-inositol 2-acetamido-2-deoxy-alpha-D-glucopyranoside deacetylase of Kineococcus radiotolerans (strain ATCC BAA-149 / DSM 14245 / SRS30216).